A 349-amino-acid polypeptide reads, in one-letter code: Thioredoxin reductase, mitochondrial (349 aa).

The N-terminal 30 residues, 1–30 (MLLVRNSTLGRLSSLRGFFRNINESNIFYR), are a transit peptide targeting the mitochondrion. FAD contacts are provided by residues 41 to 44 (SGPA), 70 to 71 (IA), glutamine 75, asparagine 84, valine 117, cysteine 175, aspartate 318, and 325 to 327 (RQA). A disulfide bond links cysteine 172 and cysteine 175.

The protein belongs to the class-II pyridine nucleotide-disulfide oxidoreductase family. In terms of assembly, homodimer. It depends on FAD as a cofactor.

The protein resides in the mitochondrion. It catalyses the reaction [thioredoxin]-dithiol + NADP(+) = [thioredoxin]-disulfide + NADPH + H(+). The sequence is that of Thioredoxin reductase, mitochondrial (TRR1) from Kluyveromyces lactis (strain ATCC 8585 / CBS 2359 / DSM 70799 / NBRC 1267 / NRRL Y-1140 / WM37) (Yeast).